The chain runs to 1412 residues: MPN domain-containing protein CG4751 (1412 aa).

Over residues 1–10 the composition is skewed to basic and acidic residues; that stretch reads MENGVEHGVD. The segment at 1–123 is disordered; the sequence is MENGVEHGVD…TKENYEGFNG (123 aa). Composition is skewed to acidic residues over residues 23 to 35 and 103 to 114; these read GEGD…EVEG and SDAGDEDNDDET. The 107-residue stretch at 113-219 folds into the RAMA domain; the sequence is ETKENYEGFN…AYKNTYLRKC (107 aa). Positions 284–420 constitute an MPN domain; that stretch reads ITVNSSALLL…LESVVKCIWI (137 aa). Positions 361, 363, and 374 each coordinate Zn(2+). Disordered stretches follow at residues 554 to 589, 669 to 734, 853 to 891, 1027 to 1066, 1271 to 1318, 1330 to 1376, and 1389 to 1412; these read INPP…QKAS, SALN…DIAR, GGSG…NSYK, SIPP…QQQQ, MKPP…NSGG, SSVP…SGGV, and LAAP…LSHD. Residues 572–600 adopt a coiled-coil conformation; it reads SGRKAEEESNAQAEQKASELKVMSLQEQL. Phosphoserine occurs at positions 699, 701, 705, 719, 723, and 728. The segment covering 702–720 has biased composition (polar residues); that stretch reads PAKSDTSSHASTSRTRNSP. Low complexity-rich tracts occupy residues 873–891 and 1036–1066; these read KSSS…NSYK and SSGS…QQQQ. Residues 1275–1290 are compositionally biased toward polar residues; that stretch reads KSTTPSSARTRESSAS. Residues Ser1288 and Ser1290 each carry the phosphoserine modification. Thr1297 bears the Phosphothreonine mark. The segment covering 1360-1370 has biased composition (low complexity); it reads LYGELAPPGAL.

It belongs to the peptidase M67 family.

Probable protease. The chain is MPN domain-containing protein CG4751 from Drosophila melanogaster (Fruit fly).